Reading from the N-terminus, the 891-residue chain is Fanconi-associated nuclease 1 homolog (891 aa).

Residues Glu712, Asp833, Glu852, and Val853 each coordinate Mn(2+). The 115-residue stretch at 770–884 (GMAEEILIIS…GFNVEICKVR (115 aa)) folds into the VRR-NUC domain.

This sequence belongs to the FAN1 family. It depends on Mn(2+) as a cofactor. Requires Mg(2+) as cofactor.

The protein resides in the nucleus. The enzyme catalyses Hydrolytically removes 5'-nucleotides successively from the 3'-hydroxy termini of 3'-hydroxy-terminated oligonucleotides.. In terms of biological role, nuclease required for the repair of DNA interstrand cross-links (ICLs). Acts as a 5'-3' exonuclease that anchors at a cut end of DNA and cleaves DNA successively at every third nucleotide, allowing to excise an ICL from one strand through flanking incisions. May act upstream of the helicase RECQL4A and the ATPase RAD5A, which is involved in error-free post-replicative repair. Functions independently of MUS81 pathway, but in a similar pathway with RECQ4A, RAD5A and MFH1 in ICL repair. The polypeptide is Fanconi-associated nuclease 1 homolog (Arabidopsis thaliana (Mouse-ear cress)).